A 155-amino-acid chain; its full sequence is MDQAKLARLQQSVRIGTGKGTPRRKTKKVHKSSGTDDKKLQTSLKKLNVQPIQAIEEVNMFKEDGNVIHFAAPKVQASVPSNTFAIYGNGEEKELTELVPGILNQLGPDSLASLRKLAESYQNMQKKEGEAKKEGEEDDEDIPDLVGETFESKVE.

Disordered stretches follow at residues 1–39 (MDQA…DDKK) and 122–155 (QNMQ…SKVE). The segment covering 21-31 (TPRRKTKKVHK) has biased composition (basic residues). In terms of domain architecture, NAC-A/B spans 34–99 (GTDDKKLQTS…GEEKELTELV (66 aa)). Positions 125-135 (QKKEGEAKKEG) are enriched in basic and acidic residues.

It belongs to the NAC-beta family. In terms of assembly, part of the nascent polypeptide-associated complex (NAC), consisting of EGD2 and EGD1. NAC associates with ribosomes via EGD1.

It is found in the cytoplasm. Its subcellular location is the nucleus. Component of the nascent polypeptide-associated complex (NAC), a dynamic component of the ribosomal exit tunnel, protecting the emerging polypeptides from interaction with other cytoplasmic proteins to ensure appropriate nascent protein targeting. The NAC complex also promotes mitochondrial protein import by enhancing productive ribosome interactions with the outer mitochondrial membrane and blocks the inappropriate interaction of ribosomes translating non-secretory nascent polypeptides with translocation sites in the membrane of the endoplasmic reticulum. EGD1 may act as a transcription factor that exert a negative effect on the expression of several genes that are transcribed by RNA polymerase II. In Coccidioides immitis (strain RS) (Valley fever fungus), this protein is Nascent polypeptide-associated complex subunit beta (EGD1).